The sequence spans 22 residues: Mu-conotoxin SxIIIC (22 aa).

3 disulfide bridges follow: Cys-3–Cys-15, Cys-4–Cys-21, and Cys-10–Cys-22. At Cys-22 the chain carries Cysteine amide.

It belongs to the conotoxin M superfamily. As to expression, expressed by the venom duct.

The protein localises to the secreted. Its function is as follows. Mu-conotoxins block voltage-gated sodium channels (Nav). This toxin potently inhibits hNav1.4/SCN4A (IC(50)=15.11 nM). It also displays lower activities on other human subtypes (Nav1.1/SCN1A; IC(50)=132 nM, Nav1.2/SCN2A; IC(50)=363.8, Nav1.3/SCN3A; IC(50)=89.4, Nav1.6/SCN3A; IC(50)=124.9, Nav1.7/SCN7A; IC(50)=152.2). At Nav1.7/SCN9A, it does not elicit change in channel voltage-dependence of fast inactivation or activation, suggesting it acts as a pore blocker. Interestingly, it blocks current inhibition in an irreversible manner (tested during 35 minutes). The sequence is that of Mu-conotoxin SxIIIC from Conus striolatus (Cone snail).